The sequence spans 277 residues: Large ribosomal subunit protein uL2 (277 aa).

2 disordered regions span residues 1–20 and 210–277; these read MAVK…TTAD and GRSR…RGGK. Residues 210 to 221 show a composition bias toward basic residues; it reads GRSRWLGRKPHQ.

It belongs to the universal ribosomal protein uL2 family. In terms of assembly, part of the 50S ribosomal subunit. Forms a bridge to the 30S subunit in the 70S ribosome.

In terms of biological role, one of the primary rRNA binding proteins. Required for association of the 30S and 50S subunits to form the 70S ribosome, for tRNA binding and peptide bond formation. It has been suggested to have peptidyltransferase activity; this is somewhat controversial. Makes several contacts with the 16S rRNA in the 70S ribosome. This chain is Large ribosomal subunit protein uL2, found in Deinococcus deserti (strain DSM 17065 / CIP 109153 / LMG 22923 / VCD115).